Consider the following 233-residue polypeptide: Syntaxin-52 (233 aa).

The Cytoplasmic portion of the chain corresponds to 1–209 (MASSSDPWMR…NKSMKSGCSC (209 aa)). The 63-residue stretch at 137–199 (RQVMREQDEG…RRVQKSLALM (63 aa)) folds into the t-SNARE coiled-coil homology domain. The chain crosses the membrane as a helical; Anchor for type IV membrane protein span at residues 210-230 (MSMLLSVLGIVGLALVIWLLV). The Vesicular segment spans residues 231–233 (KYL).

It belongs to the syntaxin family. As to quaternary structure, interacts either with VTI11 and SYP21, or with VTI11 and SYP22 in the prevacuolar compartment, or with VTI12 and SYP61 in the trans-Golgi network to form t-SNARE complexes. As to expression, expressed in root, leaf, stem, flower and silique.

The protein localises to the golgi apparatus. The protein resides in the trans-Golgi network membrane. Its subcellular location is the prevacuolar compartment membrane. In terms of biological role, vesicle trafficking protein that functions in the secretory pathway. This Arabidopsis thaliana (Mouse-ear cress) protein is Syntaxin-52 (SYP52).